Reading from the N-terminus, the 423-residue chain is Serine hydroxymethyltransferase (423 aa).

Residues L120 and 124-126 (GHL) contribute to the (6S)-5,6,7,8-tetrahydrofolate site. Residue K229 is modified to N6-(pyridoxal phosphate)lysine. A (6S)-5,6,7,8-tetrahydrofolate-binding site is contributed by 353–355 (SPF).

Belongs to the SHMT family. As to quaternary structure, homodimer. Pyridoxal 5'-phosphate serves as cofactor.

Its subcellular location is the cytoplasm. The catalysed reaction is (6R)-5,10-methylene-5,6,7,8-tetrahydrofolate + glycine + H2O = (6S)-5,6,7,8-tetrahydrofolate + L-serine. The protein operates within one-carbon metabolism; tetrahydrofolate interconversion. Its pathway is amino-acid biosynthesis; glycine biosynthesis; glycine from L-serine: step 1/1. Functionally, catalyzes the reversible interconversion of serine and glycine with tetrahydrofolate (THF) serving as the one-carbon carrier. This reaction serves as the major source of one-carbon groups required for the biosynthesis of purines, thymidylate, methionine, and other important biomolecules. Also exhibits THF-independent aldolase activity toward beta-hydroxyamino acids, producing glycine and aldehydes, via a retro-aldol mechanism. This Prochlorococcus marinus subsp. pastoris (strain CCMP1986 / NIES-2087 / MED4) protein is Serine hydroxymethyltransferase.